The chain runs to 141 residues: Large ribosomal subunit protein uL11 (141 aa).

The protein belongs to the universal ribosomal protein uL11 family. Part of the ribosomal stalk of the 50S ribosomal subunit. Interacts with L10 and the large rRNA to form the base of the stalk. L10 forms an elongated spine to which L12 dimers bind in a sequential fashion forming a multimeric L10(L12)X complex. Post-translationally, one or more lysine residues are methylated.

Functionally, forms part of the ribosomal stalk which helps the ribosome interact with GTP-bound translation factors. In Roseobacter denitrificans (strain ATCC 33942 / OCh 114) (Erythrobacter sp. (strain OCh 114)), this protein is Large ribosomal subunit protein uL11.